The primary structure comprises 241 residues: Dephospho-CoA kinase CAB5 (241 aa).

One can recognise a DPCK domain in the interval 3–211 (VVGLTGGIAC…PSKLRTVLEY (209 aa)). ATP is bound at residue 8–15 (GGIACGKS).

It belongs to the CoaE family.

The protein localises to the endoplasmic reticulum. It is found in the mitochondrion. The protein resides in the nucleus. It catalyses the reaction 3'-dephospho-CoA + ATP = ADP + CoA + H(+). The protein operates within cofactor biosynthesis; coenzyme A biosynthesis; CoA from (R)-pantothenate: step 5/5. Catalyzes the phosphorylation of the 3'-hydroxyl group of dephosphocoenzyme A to form coenzyme A. The protein is Dephospho-CoA kinase CAB5 (CAB5) of Saccharomyces cerevisiae (strain ATCC 204508 / S288c) (Baker's yeast).